A 634-amino-acid polypeptide reads, in one-letter code: Phototropic-responsive NPH3 family protein NPY2 (634 aa).

A BTB domain is found at 29–97 (SDISVDVEGS…CYGMTVTLSA (69 aa)). An NPH3 domain is found at 207-488 (DWWVEDLCEL…VQVLFFEQVR (282 aa)). Y429 carries the phosphotyrosine modification. 2 disordered regions span residues 492–517 (SSGS…YGSS) and 584–634 (QLQS…VSVS). Over residues 588–602 (KGGGEKNNGGGGGGS) the composition is skewed to gly residues. Residues 619-634 (KTATPSRNLTRRVSVS) are compositionally biased toward polar residues.

This sequence belongs to the NPH3 family. As to expression, specifically expressed in the hypophysis and the root meristems in the embryos. Highly expressed in primary root tips and radicles.

It is found in the cell membrane. Its subcellular location is the cytoplasm. The protein resides in the cytosol. Its pathway is protein modification; protein ubiquitination. Its function is as follows. May act as a substrate-specific adapter of an E3 ubiquitin-protein ligase complex (CUL3-RBX1-BTB) which mediates the ubiquitination and subsequent proteasomal degradation of target proteins. Plays an essential role in auxin-mediated organogenesis and in root gravitropic responses through the control of PIN proteins (e.g. PIN1 and PIN2) polarity in the root tip endodermal cell layer and in shoot epidermis. Recruited to the plasma membrane by PINs (e.g. PIN1 and PIN2) and, in concert with AGC kinases-mediated (e.g. D6PK and PID) PINs phosphorylation, maintains their polarity through limiting lateral diffusion-based escape. The protein is Phototropic-responsive NPH3 family protein NPY2 of Arabidopsis thaliana (Mouse-ear cress).